Reading from the N-terminus, the 66-residue chain is Beta-toxin Chui3 (66 aa).

Residues K1 to R66 enclose the LCN-type CS-alpha/beta domain. 4 disulfides stabilise this stretch: C12-C65, C16-C41, C25-C46, and C29-C48.

This sequence belongs to the long (4 C-C) scorpion toxin superfamily. Sodium channel inhibitor family. Beta subfamily. As to expression, expressed by the venom gland.

It localises to the secreted. Its function is as follows. Beta toxins bind voltage-independently at site-4 of sodium channels (Nav) and shift the voltage of activation toward more negative potentials thereby affecting sodium channel activation and promoting spontaneous and repetitive firing. Acts on human sodium channel Nav1.6/SCN8A. The polypeptide is Beta-toxin Chui3 (Centruroides huichol (Scorpion)).